Here is a 61-residue protein sequence, read N- to C-terminus: Small ribosomal subunit protein uS14 (61 aa).

4 residues coordinate Zn(2+): C24, C27, C40, and C43.

Belongs to the universal ribosomal protein uS14 family. Zinc-binding uS14 subfamily. Part of the 30S ribosomal subunit. Contacts proteins S3 and S10. The cofactor is Zn(2+).

Binds 16S rRNA, required for the assembly of 30S particles and may also be responsible for determining the conformation of the 16S rRNA at the A site. The chain is Small ribosomal subunit protein uS14 from Elusimicrobium minutum (strain Pei191).